The primary structure comprises 142 residues: MNYFLIFLTLLVAVIVEKIEELVAIRFFSSYVLDIARMEAEIEEYKELSMLAMLSGDREAYRGFQDMMNEIYGRVFFRKISFFTPLYFLLLSPYIVALQFLGVENSLSIVLPVAVLYFSAKLFYGMVRDFVKSYVDYRKANN.

A run of 2 helical transmembrane segments spans residues 75–97 and 107–124; these read VFFR…YIVA and LSIV…KLFY.

Its subcellular location is the cell membrane. This is an uncharacterized protein from Archaeoglobus fulgidus (strain ATCC 49558 / DSM 4304 / JCM 9628 / NBRC 100126 / VC-16).